The chain runs to 344 residues: N-acetyl-gamma-glutamyl-phosphate reductase (344 aa).

The active site involves C149.

The protein belongs to the NAGSA dehydrogenase family. Type 1 subfamily.

It is found in the cytoplasm. It carries out the reaction N-acetyl-L-glutamate 5-semialdehyde + phosphate + NADP(+) = N-acetyl-L-glutamyl 5-phosphate + NADPH + H(+). The protein operates within amino-acid biosynthesis; L-arginine biosynthesis; N(2)-acetyl-L-ornithine from L-glutamate: step 3/4. Functionally, catalyzes the NADPH-dependent reduction of N-acetyl-5-glutamyl phosphate to yield N-acetyl-L-glutamate 5-semialdehyde. This Thermoanaerobacter sp. (strain X514) protein is N-acetyl-gamma-glutamyl-phosphate reductase.